The chain runs to 363 residues: Homeobox protein DTH-2 (363 aa).

Residues 133-192 constitute a DNA-binding region (homeobox); it reads RRKRRILFSQAQIYELERRFKQQKYLSAPEREHLANLINLTPTQVKIWFQNHRYKCKRSQ. Positions 189-246 are disordered; it reads KRSQKDKEKEQQKEKSYHLKKNIVDDKERSPNKQICNASSSDRSTPEEPVAKAKESGL. The segment covering 191–219 has biased composition (basic and acidic residues); sequence SQKDKEKEQQKEKSYHLKKNIVDDKERSP. Over residues 220 to 231 the composition is skewed to polar residues; that stretch reads NKQICNASSSDR. The span at 232-246 shows a compositional bias: basic and acidic residues; the sequence is STPEEPVAKAKESGL.

It belongs to the NK-2 homeobox family. As to expression, intestine and unidentified peripheral parenchymal cells. Slightly higher levels in the cephalic region compared to other body regions.

Its subcellular location is the nucleus. Functionally, this protein might be involved in determination and/or differentiation of nerve cells in the continuous replacement of neurons in the cephalic region. In Girardia tigrina (Planarian), this protein is Homeobox protein DTH-2 (DTH-2).